The sequence spans 88 residues: Apolipoprotein C-I (88 aa).

Residues 1–26 (MRLILSLPVLVVVLSMVLEGPAPAQA) form the signal peptide.

This sequence belongs to the apolipoprotein C1 family.

The protein localises to the secreted. Inhibitor of lipoprotein binding to the low density lipoprotein (LDL) receptor, LDL receptor-related protein, and very low density lipoprotein (VLDL) receptor. Associates with high density lipoproteins (HDL) and the triacylglycerol-rich lipoproteins in the plasma and makes up about 10% of the protein of the VLDL and 2% of that of HDL. Appears to interfere directly with fatty acid uptake and is also the major plasma inhibitor of cholesteryl ester transfer protein (CETP). Binds free fatty acids and reduces their intracellular esterification. Modulates the interaction of APOE with beta-migrating VLDL and inhibits binding of beta-VLDL to the LDL receptor-related protein. In Lycaon pictus (African wild dog), this protein is Apolipoprotein C-I (APOC1).